The following is a 163-amino-acid chain: Protein-export protein SecB (163 aa).

The protein belongs to the SecB family. As to quaternary structure, homotetramer, a dimer of dimers. One homotetramer interacts with 1 SecA dimer.

It is found in the cytoplasm. In terms of biological role, one of the proteins required for the normal export of preproteins out of the cell cytoplasm. It is a molecular chaperone that binds to a subset of precursor proteins, maintaining them in a translocation-competent state. It also specifically binds to its receptor SecA. This chain is Protein-export protein SecB, found in Methylibium petroleiphilum (strain ATCC BAA-1232 / LMG 22953 / PM1).